Reading from the N-terminus, the 437-residue chain is MSTLLLVEAFYGGSHKQLMDLIKEEVEGCILYTLPAKKWHWRARTAALYFMQAILPSDTYRVLFTSSVLNLAELVALRPDLGKLKKILYFHENQLIYPVQKSQERDFQYGYNQILSCLVADTVVFNSAFNMESFLTSIKTFLKKIPDHRPKNLEEIIRPKCRVLYFPINFPDIRQYLPEHKCIPHNLVDKSSSDISYCPKTSIQTGRMSVEFSDHQIQCSIDESSAEQEKTTVSEKNNCEGVDHVILHSQSTLAGDIHQEKPLHIVWPHRWEHDKDPETFFKVLLKLKEKELTFHLSVLGETFTDVPDIFSEARITLGSSVLHWGYLASKDDYLQALCMADVVVSTAKHEFFGVAMLEAVHCGCYPLCPKSLVYPEIFPAVYLYSSPEQLLRKLEDFCKRPDIVRRHRFQGETERFSWAALRGEFRSLLDAEPREDL.

It belongs to the glycosyltransferase group 1 family. Glycosyltransferase 4 subfamily.

It localises to the cytoplasm. The protein localises to the nucleus. The enzyme catalyses queuosine(34) in tRNA(Asp) + GDP-alpha-D-mannose = O-4''-alpha-D-mannosylqueuosine(34) in tRNA(Asp) + GDP + H(+). Glycosyltransferase that specifically catalyzes mannosylation of cytoplasmic tRNA(Asp) modified with queuosine at position 34 (queuosine(34)). Mannosylates the cyclopentene moiety of queuosine(34) in tRNA(Asp) to form mannosyl-queuosine(34). Mannosylation of queuosine(34) in tRNA(Asp) is required to slow-down elongation at cognate codons, GAC and GAU, thereby regulating protein translation. This Xenopus laevis (African clawed frog) protein is tRNA-queuosine alpha-mannosyltransferase (gtdc1).